The primary structure comprises 163 residues: Ribonuclease H (163 aa).

The RNase H type-1 domain occupies 4–146; it reads SPKKVLIYTD…CDRLAVRASQ (143 aa). The Mg(2+) site is built by D13, E51, D73, and D138.

Belongs to the RNase H family. Monomer. Requires Mg(2+) as cofactor.

The protein resides in the cytoplasm. It catalyses the reaction Endonucleolytic cleavage to 5'-phosphomonoester.. Its function is as follows. Endonuclease that specifically degrades the RNA of RNA-DNA hybrids. The protein is Ribonuclease H of Rippkaea orientalis (strain PCC 8801 / RF-1) (Cyanothece sp. (strain PCC 8801)).